A 206-amino-acid chain; its full sequence is Holliday junction branch migration complex subunit RuvA (206 aa).

Positions 1 to 64 (MIGRLSGTIL…EDAQLLYGFN (64 aa)) are domain I. The segment at 65-143 (KKSERELFRE…GWGEGDLFTP (79 aa)) is domain II. Positions 144–157 (ASDAAASNAEIQKY) are flexible linker. The interval 158–206 (SSARAEDEAVSALIALGYKALQAAKVVSQVVKPEMSSENIIREALRSMV) is domain III.

The protein belongs to the RuvA family. In terms of assembly, homotetramer. Forms an RuvA(8)-RuvB(12)-Holliday junction (HJ) complex. HJ DNA is sandwiched between 2 RuvA tetramers; dsDNA enters through RuvA and exits via RuvB. An RuvB hexamer assembles on each DNA strand where it exits the tetramer. Each RuvB hexamer is contacted by two RuvA subunits (via domain III) on 2 adjacent RuvB subunits; this complex drives branch migration. In the full resolvosome a probable DNA-RuvA(4)-RuvB(12)-RuvC(2) complex forms which resolves the HJ.

The protein localises to the cytoplasm. The RuvA-RuvB-RuvC complex processes Holliday junction (HJ) DNA during genetic recombination and DNA repair, while the RuvA-RuvB complex plays an important role in the rescue of blocked DNA replication forks via replication fork reversal (RFR). RuvA specifically binds to HJ cruciform DNA, conferring on it an open structure. The RuvB hexamer acts as an ATP-dependent pump, pulling dsDNA into and through the RuvAB complex. HJ branch migration allows RuvC to scan DNA until it finds its consensus sequence, where it cleaves and resolves the cruciform DNA. The polypeptide is Holliday junction branch migration complex subunit RuvA (Photobacterium profundum (strain SS9)).